The sequence spans 134 residues: Small ribosomal subunit protein uS8c (134 aa).

Belongs to the universal ribosomal protein uS8 family. In terms of assembly, part of the 30S ribosomal subunit.

The protein localises to the plastid. It localises to the chloroplast. In terms of biological role, one of the primary rRNA binding proteins, it binds directly to 16S rRNA central domain where it helps coordinate assembly of the platform of the 30S subunit. In Panax ginseng (Korean ginseng), this protein is Small ribosomal subunit protein uS8c (rps8).